Consider the following 122-residue polypeptide: MIQQESRVRVADNTGAKEILCIRVLGGSSRRYAGIGDVIVATVKDAIPGGNIKKGEVVKAVIVRTTKERRRPDGSYIKFDENAAVLIKADSDPRGTRIFGPVGRELREKKFMKIVSLAPEVL.

It belongs to the universal ribosomal protein uL14 family. As to quaternary structure, part of the 50S ribosomal subunit. Forms a cluster with proteins L3 and L19. In the 70S ribosome, L14 and L19 interact and together make contacts with the 16S rRNA in bridges B5 and B8.

Binds to 23S rRNA. Forms part of two intersubunit bridges in the 70S ribosome. The protein is Large ribosomal subunit protein uL14 of Rhodococcus erythropolis (strain PR4 / NBRC 100887).